We begin with the raw amino-acid sequence, 228 residues long: MPTIMSAVVLLSGGLDSATVLRMAHATGQRIHALSFRYGQRHTMELEMARKQALSLPGVAHRIMDLQLSLFGGSALTADIPVPKGGVDENTIPVTYVPARNMVFLSLALAWAESLGAQHLYIGVNAVDYSGYPDCRPEFIQSFQQTANLATKAGVEGHPFTVHTPLINLTKAQIIQQGLALGVDYGLTRSCYDPDAQGAGCGLCDACRLRLQGFAEAGVPDPAPYQGP.

ATP is bound at residue 11–21 (LSGGLDSATVL). 4 residues coordinate Zn(2+): Cys191, Cys201, Cys204, and Cys207.

This sequence belongs to the QueC family. It depends on Zn(2+) as a cofactor.

The catalysed reaction is 7-carboxy-7-deazaguanine + NH4(+) + ATP = 7-cyano-7-deazaguanine + ADP + phosphate + H2O + H(+). It functions in the pathway purine metabolism; 7-cyano-7-deazaguanine biosynthesis. Catalyzes the ATP-dependent conversion of 7-carboxy-7-deazaguanine (CDG) to 7-cyano-7-deazaguanine (preQ(0)). The sequence is that of 7-cyano-7-deazaguanine synthase from Magnetococcus marinus (strain ATCC BAA-1437 / JCM 17883 / MC-1).